A 231-amino-acid polypeptide reads, in one-letter code: MKIAVIGAMEEEVTILRSKLEQTNREVIANCEFTSGFYEGKEVVLLKSGIGKVNAAMSTTILLDRFKPDVVINTGSAGGFHHSLNVGDIVISTEVRHHDVDVTAFDYEYGQVPNLPAAYKADNALIQAAEDEASELGHIQVVKGTIATGDSFMSDPDRVAFIRGKFEDLYAVEMEAAAVAQVSYQFNTPFVVIRALSDIAGKESEISFDQFLEQAAKHSTDLVLRMIKRIN.

E12 functions as the Proton acceptor in the catalytic mechanism. Substrate contacts are provided by residues G78, M153, and 174–175; that span reads ME. D198 (proton donor) is an active-site residue.

Belongs to the PNP/UDP phosphorylase family. MtnN subfamily.

The catalysed reaction is S-adenosyl-L-homocysteine + H2O = S-(5-deoxy-D-ribos-5-yl)-L-homocysteine + adenine. It carries out the reaction S-methyl-5'-thioadenosine + H2O = 5-(methylsulfanyl)-D-ribose + adenine. The enzyme catalyses 5'-deoxyadenosine + H2O = 5-deoxy-D-ribose + adenine. The protein operates within amino-acid biosynthesis; L-methionine biosynthesis via salvage pathway; S-methyl-5-thio-alpha-D-ribose 1-phosphate from S-methyl-5'-thioadenosine (hydrolase route): step 1/2. In terms of biological role, catalyzes the irreversible cleavage of the glycosidic bond in both 5'-methylthioadenosine (MTA) and S-adenosylhomocysteine (SAH/AdoHcy) to adenine and the corresponding thioribose, 5'-methylthioribose and S-ribosylhomocysteine, respectively. Also cleaves 5'-deoxyadenosine, a toxic by-product of radical S-adenosylmethionine (SAM) enzymes, into 5-deoxyribose and adenine. This chain is 5'-methylthioadenosine/S-adenosylhomocysteine nucleosidase, found in Bacillus licheniformis (strain ATCC 14580 / DSM 13 / JCM 2505 / CCUG 7422 / NBRC 12200 / NCIMB 9375 / NCTC 10341 / NRRL NRS-1264 / Gibson 46).